A 103-amino-acid chain; its full sequence is UPF0473 protein LCA_0390 (103 aa).

This sequence belongs to the UPF0473 family.

In Latilactobacillus sakei subsp. sakei (strain 23K) (Lactobacillus sakei subsp. sakei), this protein is UPF0473 protein LCA_0390.